Here is a 269-residue protein sequence, read N- to C-terminus: Protein BASIC PENTACYSTEINE3 (269 aa).

Belongs to the BBR/BPC family. In terms of tissue distribution, expressed in seedlings, leaves and pistils. Detected in the base of flowers and tips of carpels, in petal vasculature, in anthers, in young rosette, in the lateral and primary roots, and in the gynobasal portion of the ovule.

Its subcellular location is the nucleus. Functionally, transcriptional regulator that specifically binds to GA-rich elements (GAGA-repeats) present in regulatory sequences of genes involved in developmental processes. The polypeptide is Protein BASIC PENTACYSTEINE3 (BPC3) (Arabidopsis thaliana (Mouse-ear cress)).